A 225-amino-acid chain; its full sequence is Adenosylcobinamide-GDP ribazoletransferase (225 aa).

Helical transmembrane passes span 34-54, 93-113, 116-136, 165-185, and 204-224; these read FVGI…FWFL, NLGT…FYSF, VSAF…LLLL, PLLL…AITI, and VVGA…YFLA.

This sequence belongs to the CobS family. Mg(2+) serves as cofactor.

The protein resides in the cell membrane. It carries out the reaction alpha-ribazole + adenosylcob(III)inamide-GDP = adenosylcob(III)alamin + GMP + H(+). The catalysed reaction is alpha-ribazole 5'-phosphate + adenosylcob(III)inamide-GDP = adenosylcob(III)alamin 5'-phosphate + GMP + H(+). Its pathway is cofactor biosynthesis; adenosylcobalamin biosynthesis; adenosylcobalamin from cob(II)yrinate a,c-diamide: step 7/7. In terms of biological role, joins adenosylcobinamide-GDP and alpha-ribazole to generate adenosylcobalamin (Ado-cobalamin). Also synthesizes adenosylcobalamin 5'-phosphate from adenosylcobinamide-GDP and alpha-ribazole 5'-phosphate. In Archaeoglobus fulgidus (strain ATCC 49558 / DSM 4304 / JCM 9628 / NBRC 100126 / VC-16), this protein is Adenosylcobinamide-GDP ribazoletransferase (cobS1).